The sequence spans 284 residues: uncharacterized protein (284 aa).

Positions 1-23 (MKRGCAIAVMICGLITSVSAASA) are cleaved as a signal peptide.

Belongs to the surface antigen msp4 family.

This is an uncharacterized protein from Brucella abortus (strain 2308).